The sequence spans 471 residues: MSKKYDAGVKEYRDTYWTPDYVPLDTDLLACFKCTGQEGVPKEEVAAAVAAESSTGTWSTVWSELLTDLDFYKGRCYRIEDVPGDKESFYAFIAYPLDLFEEGSITNVLTSLVGNVFGFKALRHLRLEDIRFPMAFIKSCYGPPNGIQVERDRMNKYGRPLLGCTIKPKLGLSGKNYGRVVYECLRGGLDFTKDDENINSQPFQRWQNRFEFVAEAIKLSEQETGERKGHYLNVTANTPEEMYERAEFAKELGMPIIMHDFITGGFTANTGLSKWCRKNGMLLHIHRAMHAVIDRHPKHGIHFRVLAKCLRLSGGDQLHTGTVVGKLEGDRQTTLGYIDQLRESFVPEDRSRGNFFDQDWGSMPGVFAVASGGIHVWHMPALVTIFGDDSVLQFGGGTHGHPWGSAAGAAANRVALEACVKARNAGRHLEKESRDILTEAAKHSPELAIALETWKEIKFEFDTVDKLDVQN.

Substrate-binding residues include Asn115 and Thr165. Lys167 serves as the catalytic Proton acceptor. Position 169 (Lys169) interacts with substrate. Residues Lys193, Asp195, and Glu196 each contribute to the Mg(2+) site. Position 193 is an N6-carboxylysine (Lys193). His286 (proton acceptor) is an active-site residue. 3 residues coordinate substrate: Arg287, His319, and Ser371.

It belongs to the RuBisCO large chain family. Type I subfamily. As to quaternary structure, heterohexadecamer of 8 large chains and 8 small chains. Mg(2+) is required as a cofactor.

Its subcellular location is the carboxysome. The enzyme catalyses 2 (2R)-3-phosphoglycerate + 2 H(+) = D-ribulose 1,5-bisphosphate + CO2 + H2O. The catalysed reaction is D-ribulose 1,5-bisphosphate + O2 = 2-phosphoglycolate + (2R)-3-phosphoglycerate + 2 H(+). Functionally, ruBisCO catalyzes two reactions: the carboxylation of D-ribulose 1,5-bisphosphate, the primary event in carbon dioxide fixation, as well as the oxidative fragmentation of the pentose substrate in the photorespiration process. Both reactions occur simultaneously and in competition at the same active site. The chain is Ribulose bisphosphate carboxylase large chain from Synechococcus sp. (strain CC9605).